The following is a 118-amino-acid chain: uncharacterized protein (118 aa).

A helical transmembrane segment spans residues 7–27 (LLTGLFVGGIIGGAAVLLTAP). Residues 31 to 118 (KQLREKMKTN…IRQLEKTLQN (88 aa)) adopt a coiled-coil conformation.

It is found in the cell membrane. This is an uncharacterized protein from Bacillus subtilis (strain 168).